Consider the following 275-residue polypeptide: 2,3,4,5-tetrahydropyridine-2,6-dicarboxylate N-succinyltransferase (275 aa).

Residues R104 and D141 each coordinate substrate.

The protein belongs to the transferase hexapeptide repeat family. In terms of assembly, homotrimer.

The protein resides in the cytoplasm. It carries out the reaction (S)-2,3,4,5-tetrahydrodipicolinate + succinyl-CoA + H2O = (S)-2-succinylamino-6-oxoheptanedioate + CoA. It functions in the pathway amino-acid biosynthesis; L-lysine biosynthesis via DAP pathway; LL-2,6-diaminopimelate from (S)-tetrahydrodipicolinate (succinylase route): step 1/3. In Aeromonas salmonicida (strain A449), this protein is 2,3,4,5-tetrahydropyridine-2,6-dicarboxylate N-succinyltransferase.